The sequence spans 1070 residues: DNA-directed RNA polymerase subunit beta (1070 aa).

This sequence belongs to the RNA polymerase beta chain family. As to quaternary structure, in plastids the minimal PEP RNA polymerase catalytic core is composed of four subunits: alpha, beta, beta', and beta''. When a (nuclear-encoded) sigma factor is associated with the core the holoenzyme is formed, which can initiate transcription.

Its subcellular location is the plastid. The protein resides in the chloroplast. It catalyses the reaction RNA(n) + a ribonucleoside 5'-triphosphate = RNA(n+1) + diphosphate. DNA-dependent RNA polymerase catalyzes the transcription of DNA into RNA using the four ribonucleoside triphosphates as substrates. In Morus indica (Mulberry), this protein is DNA-directed RNA polymerase subunit beta.